Consider the following 123-residue polypeptide: Fluoride-specific ion channel FluC (123 aa).

4 helical membrane passes run 1-21 (MLEI…RYLM), 32-52 (ILSL…GLVI), 64-84 (IGLL…SFSY), and 99-119 (FGYT…GIYL). 2 residues coordinate Na(+): glycine 74 and threonine 77.

The protein belongs to the fluoride channel Fluc/FEX (TC 1.A.43) family.

The protein resides in the cell inner membrane. It carries out the reaction fluoride(in) = fluoride(out). Its activity is regulated as follows. Na(+) is not transported, but it plays an essential structural role and its presence is essential for fluoride channel function. In terms of biological role, fluoride-specific ion channel. Important for reducing fluoride concentration in the cell, thus reducing its toxicity. This is Fluoride-specific ion channel FluC from Gloeothece citriformis (strain PCC 7424) (Cyanothece sp. (strain PCC 7424)).